An 852-amino-acid polypeptide reads, in one-letter code: Disrupted in schizophrenia 1 homolog (852 aa).

Disordered stretches follow at residues 1 to 86, 236 to 264, and 280 to 320; these read MQGG…GLDP, EAEP…PRHL, and QVTR…QGGG. The segment at 1–294 is interaction with MAP1A; sequence MQGGGPRGAP…SSRQSECGTV (294 aa). Over residues 65–79 the composition is skewed to polar residues; it reads AGLTGQQSQHSQSKA. Basic and acidic residues predominate over residues 253-263; sequence SSDRPHGDPRH. Positions 288 to 311 are enriched in low complexity; the sequence is QSECGTVSSSSSDTGFSSQDASSA. Positions 295 to 693 are interaction with TRAF3IP1; sequence SSSSSDTGFS…LGRVWKADLE (399 aa). Coiled coils occupy residues 367-397 and 449-496; these read EDGD…ALPS and ITRR…LLRW. Residues 437–594 form a required for localization to punctate cytoplasmic foci region; sequence LRTTAQDSLP…LLEAKMLALS (158 aa). Residues 443-852 are necessary and sufficient for interaction with PCNT and localization at the centrosome; it reads DSLPASITRR…PTAGAQETEA (410 aa). Positions 595–852 are interaction with ATF4 and ATF5; it reads GSCFSTAKEL…PTAGAQETEA (258 aa). Disordered regions lie at residues 706-746 and 833-852; these read EAGS…KSPL and KEAG…ETEA. The interval 728-852 is interaction with NDEL1 and PAFAH1B1; the sequence is TAALAVPRTP…PTAGAQETEA (125 aa). Positions 728-852 are interaction with PAFAH1B1; it reads TAALAVPRTP…PTAGAQETEA (125 aa). Residues 802-835 are interaction with NDEL1; the sequence is SHDEALFQSLQGELQTVKETLQAMILQLQPTKEA.

In terms of assembly, interacts with NDEL1. Interacts with CCDC88A (via C-terminus); the interaction is direct. Interacts with GSK3B. Interacts with tubulin alpha, ACTN2, ANKHD1, ATF4, ATF5, CEP63, EIF3S3, MAP1A, NDEL1, PAFAH1B1, RANBP9, SPTBN4, SYNE1 and TRAF3IP1. Interaction with microtubules may be mediated in part by TRAF3IP1. Interacts (via C-terminal) with PCNT. Interacts with CHCHD6. Interacts with CCDC141. Interacts with FBXW7, the substrate-recognition component of a SCF (SKP1-CUL1-F-box protein) E3 ubiquitin-protein ligase complex; the interaction targets DISC1 for proteasomal degradation. Interacts with ZNF365. Interacts with ATF4; inhibiting ATF4 transcription factor activity by disrupting ATF4 dimerization and DNA-binding. Interacts with PDE4B. Ubiquitinated. Ubiquitination with 'Lys-48'-linked polyubiquitin chains leads to its proteasomal degradation. Expressed in granule cell precursors within the dentate migratory stream during the first week of postnatal life and in differentiated granule cells of the hippocampus (at protein level). Detected in heart, brain, kidney, and testis. Expressed in dentate gyrus, hippocampus and in the olfactory bulb.

It localises to the cytoplasm. The protein localises to the cytoskeleton. The protein resides in the mitochondrion. Its subcellular location is the microtubule organizing center. It is found in the centrosome. It localises to the postsynaptic density. Involved in the regulation of multiple aspects of embryonic and adult neurogenesis. Required for neural progenitor proliferation in the ventrical/subventrical zone during embryonic brain development and in the adult dentate gyrus of the hippocampus. Participates in the Wnt-mediated neural progenitor proliferation as a positive regulator by modulating GSK3B activity and CTNNB1 abundance. Plays a role as a modulator of the AKT-mTOR signaling pathway controlling the tempo of the process of newborn neurons integration during adult neurogenesis, including neuron positioning, dendritic development and synapse formation. Inhibits the activation of AKT-mTOR signaling upon interaction with CCDC88A. Regulates the migration of early-born granule cell precursors toward the dentate gyrus during the hippocampal development. Inhibits ATF4 transcription factor activity in neurons by disrupting ATF4 dimerization and DNA-binding. Plays a role, together with PCNT, in the microtubule network formation. The protein is Disrupted in schizophrenia 1 homolog of Mus musculus (Mouse).